Consider the following 1238-residue polypeptide: Cullin-associated NEDD8-dissociated protein 1 (1238 aa).

HEAT repeat units lie at residues 41–78 (TYENKIVTKLLALTADSANNVQENVVKCLGLLIKRVKD), 126–167 (LVIK…KYGS), 171–208 (GDLENIQKVVLPKLNATRPAIRKRAILCLANIAFPSPD), 210–247 (LFNSLLDYIIKSIEEAKKPDHISTLIQAIGAICKSSGY), and 251–292 (KYLP…KCQK). A disordered region spans residues 315–354 (YSDDGEGEEDGDEEEEEMETSGDNDEEQEEEEEEEDLSDD). 9 HEAT repeats span residues 382-419 (ELYQKVAPVLYNRFKEREENVRLDIFTTFVLLLKQLNK), 432-469 (QQVPKLVQSISKSLIDKSIRTRVGAIALLKELVMIIPG), 603-641 (EIQSELQPCLSILLERLDNELTRVVTVKVLSRIINSSIN), 646-683 (SILPSAIKLLSTFLRKNNRVLKQSSLIALNDIVKVCPN), 688-725 (SLLTGILTEMATLINESDLQITHLAFVFIQNLLKNYSE), 853-890 (HENENLQESVYKTFEANNEEIKQVAALCLGDIAVCSLQ), 933-966 (PFLQSILPLLFDNCVNEEEGTRNIVAECLGKLSM), 967-1004 (IEPNEIIPKLVEKIKSPSPLERSTIVTSIKFSIMENKE), and 1008-1045 (QYLAPNISQFLSLLHDGDLIVRRSALLSLNYIAHNKPN).

This sequence belongs to the CAND family.

Its subcellular location is the nucleus. In terms of biological role, key assembly factor of SCF (SKP1-CUL1-F-box protein) E3 ubiquitin ligase complexes that promotes the exchange of the substrate-recognition F-box subunit in SCF complexes, thereby playing a key role in the cellular repertoire of SCF complexes. Acts as a F-box protein exchange factor. The sequence is that of Cullin-associated NEDD8-dissociated protein 1 (cand1) from Dictyostelium discoideum (Social amoeba).